We begin with the raw amino-acid sequence, 148 residues long: 3-hydroxyacyl-[acyl-carrier-protein] dehydratase FabZ (148 aa).

Residue histidine 50 is part of the active site.

This sequence belongs to the thioester dehydratase family. FabZ subfamily.

The protein localises to the cytoplasm. The catalysed reaction is a (3R)-hydroxyacyl-[ACP] = a (2E)-enoyl-[ACP] + H2O. Its function is as follows. Involved in unsaturated fatty acids biosynthesis. Catalyzes the dehydration of short chain beta-hydroxyacyl-ACPs and long chain saturated and unsaturated beta-hydroxyacyl-ACPs. This is 3-hydroxyacyl-[acyl-carrier-protein] dehydratase FabZ from Lactobacillus helveticus (strain DPC 4571).